The chain runs to 764 residues: 5-methyltetrahydropteroyltriglutamate--homocysteine methyltransferase (764 aa).

5-methyltetrahydropteroyltri-L-glutamate is bound by residues 16–19 and Lys121; that span reads RELK. L-homocysteine contacts are provided by residues 440 to 442 and Glu493; that span reads IGS. L-methionine-binding positions include 440 to 442 and Glu493; that span reads IGS. 5-methyltetrahydropteroyltri-L-glutamate contacts are provided by residues 524-525 and Trp570; that span reads RC. Asp608 provides a ligand contact to L-homocysteine. An L-methionine-binding site is contributed by Asp608. Glu614 is a binding site for 5-methyltetrahydropteroyltri-L-glutamate. 3 residues coordinate Zn(2+): His650, Cys652, and Glu674. His703 acts as the Proton donor in catalysis. Cys735 serves as a coordination point for Zn(2+).

It belongs to the vitamin-B12 independent methionine synthase family. It depends on Zn(2+) as a cofactor.

It catalyses the reaction 5-methyltetrahydropteroyltri-L-glutamate + L-homocysteine = tetrahydropteroyltri-L-glutamate + L-methionine. The protein operates within amino-acid biosynthesis; L-methionine biosynthesis via de novo pathway; L-methionine from L-homocysteine (MetE route): step 1/1. Its function is as follows. Catalyzes the transfer of a methyl group from 5-methyltetrahydrofolate to homocysteine resulting in methionine formation. The chain is 5-methyltetrahydropteroyltriglutamate--homocysteine methyltransferase from Burkholderia cenocepacia (strain HI2424).